The following is a 441-amino-acid chain: Ribulose bisphosphate carboxylase large chain (441 aa).

Lysine 5 is modified (N6,N6,N6-trimethyllysine). Residues asparagine 114 and threonine 164 each contribute to the substrate site. Residue lysine 166 is the Proton acceptor of the active site. Lysine 168 contacts substrate. Residues lysine 192, aspartate 194, and glutamate 195 each contribute to the Mg(2+) site. Lysine 192 carries the post-translational modification N6-carboxylysine. The Proton acceptor role is filled by histidine 285. Substrate contacts are provided by arginine 286, histidine 318, and serine 370.

This sequence belongs to the RuBisCO large chain family. Type I subfamily. In terms of assembly, heterohexadecamer of 8 large chains and 8 small chains; disulfide-linked. The disulfide link is formed within the large subunit homodimers. Mg(2+) serves as cofactor. The disulfide bond which can form in the large chain dimeric partners within the hexadecamer appears to be associated with oxidative stress and protein turnover.

It is found in the plastid. The protein localises to the chloroplast. It carries out the reaction 2 (2R)-3-phosphoglycerate + 2 H(+) = D-ribulose 1,5-bisphosphate + CO2 + H2O. It catalyses the reaction D-ribulose 1,5-bisphosphate + O2 = 2-phosphoglycolate + (2R)-3-phosphoglycerate + 2 H(+). Functionally, ruBisCO catalyzes two reactions: the carboxylation of D-ribulose 1,5-bisphosphate, the primary event in carbon dioxide fixation, as well as the oxidative fragmentation of the pentose substrate in the photorespiration process. Both reactions occur simultaneously and in competition at the same active site. The polypeptide is Ribulose bisphosphate carboxylase large chain (Argyrochosma delicatula (Delicate cloak fern)).